The sequence spans 122 residues: Protein GL2-INTERACTING REPRESSOR 1 (122 aa).

The segment covering 1–10 has biased composition (basic and acidic residues); it reads MSRRSPKLEL. The disordered stretch occupies residues 1–62; it reads MSRRSPKLEL…PSVRYSTSPE (62 aa). An EAR motif is present at residues 7 to 12; sequence KLELKL. Over residues 27–46 the composition is skewed to low complexity; it reads SPSRSATTSPTSPPSSCVSS. Positions 47 to 62 are enriched in polar residues; that stretch reads EMNQDEPSVRYSTSPE.

Interacts with GL2. Interacts with TPL. As to expression, expressed in root and shoot meristems.

It is found in the nucleus. Acts as a negative regulator of root hair development redundantly with GIR2. GIR1 and GIR2 may function as adapter proteins that associate with GL2 and participate in the control of root hair formation. GIR1 and GIR2 may function as adapter proteins that associate with TPL and participate in the repression of root gene expression. The chain is Protein GL2-INTERACTING REPRESSOR 1 from Arabidopsis thaliana (Mouse-ear cress).